Here is an 874-residue protein sequence, read N- to C-terminus: ATP-dependent RNA helicase DDX54 (874 aa).

A disordered region spans residues 1–76 (MAAGRRVGPG…FPTSECVSDV (76 aa)). Over residues 20 to 30 (WKKKRLRKRRT) the composition is skewed to basic residues. Thr30 bears the Phosphothreonine mark. 4 positions are modified to phosphoserine: Ser33, Ser38, Ser40, and Ser74. The segment covering 39–50 (DSDDGEFEIQAE) has biased composition (acidic residues). The Q motif signature appears at 95–123 (GGFQSMGLSYPVFKGIMKKGYKVPTPIQR). A Helicase ATP-binding domain is found at 126–298 (IPVILDGKDV…RAGLTEPVLI (173 aa)). 139-146 (ARTGSGKT) serves as a coordination point for ATP. Residues 246 to 249 (DEAD) carry the DEAD box motif. A Helicase C-terminal domain is found at 328-472 (YLLQNVVRPQ…ARPCEEPSVA (145 aa)). Over residues 581 to 590 (ASSKDPSSQM) the composition is skewed to polar residues. Residues 581-687 (ASSKDPSSQM…PKDFDSERGL (107 aa)) are disordered. Positions 636 to 645 (TVEGVFTEVV) are enriched in low complexity. Residues 664–685 (ETRQRDQEFYVPYRPKDFDSER) show a composition bias toward basic and acidic residues. Phosphoserine occurs at positions 688 and 690. The segment at 712–874 (AQNMSRGQQQ…SRKGKMRKRM (163 aa)) is disordered. The span at 713–722 (QNMSRGQQQL) shows a compositional bias: polar residues. 2 stretches are compositionally biased toward basic and acidic residues: residues 737-747 (QEDKKKIKTES) and 755-771 (YKRD…KIDD). Residues Ser774 and Ser780 each carry the phosphoserine modification. Residues 812 to 823 (MRSELKTKEQIL) show a composition bias toward basic and acidic residues. The segment covering 864 to 874 (PSRKGKMRKRM) has biased composition (basic residues).

It belongs to the DEAD box helicase family. DDX54/DBP10 subfamily. In terms of assembly, interacts in a hormone-dependent manner with nuclear receptors.

It is found in the nucleus. Its subcellular location is the nucleolus. It carries out the reaction ATP + H2O = ADP + phosphate + H(+). In terms of biological role, has RNA-dependent ATPase activity. Represses the transcriptional activity of nuclear receptors. This is ATP-dependent RNA helicase DDX54 (Ddx54) from Mus musculus (Mouse).